The sequence spans 244 residues: Homeobox-leucine zipper protein HOX14 (244 aa).

Positions 25-64 (ASGEVQGERPRARRRRRRGARCVGGGGGGGEVDGGDPKKR) are disordered. The span at 35–44 (RARRRRRRGA) shows a compositional bias: basic residues. The span at 46-56 (CVGGGGGGGEV) shows a compositional bias: gly residues. The homeobox DNA-binding region spans 59 to 118 (GDPKKRRLSDEQVEMLELSFREERKLETGRKVHLASELGLDPKQVAVWFQNRRARHKSKL). The stretch at 108–167 (QNRRARHKSKLLEEEFSKLKHAHDAAILHKCHLENEVLRLKERLVVAEEEVRRLRSAAGS) forms a coiled coil.

Belongs to the HD-ZIP homeobox family. Class I subfamily. Expressed in roots, stems, leaf blades and panicles.

It is found in the nucleus. Its function is as follows. Probable transcription factor. The chain is Homeobox-leucine zipper protein HOX14 (HOX14) from Oryza sativa subsp. indica (Rice).